A 128-amino-acid polypeptide reads, in one-letter code: Large ribosomal subunit protein bL19 (128 aa).

Belongs to the bacterial ribosomal protein bL19 family.

Functionally, this protein is located at the 30S-50S ribosomal subunit interface and may play a role in the structure and function of the aminoacyl-tRNA binding site. This Herminiimonas arsenicoxydans protein is Large ribosomal subunit protein bL19.